Consider the following 164-residue polypeptide: Cyanate hydratase (164 aa).

Active-site residues include arginine 90, glutamate 93, and serine 116.

Belongs to the cyanase family.

The catalysed reaction is cyanate + hydrogencarbonate + 3 H(+) = NH4(+) + 2 CO2. Functionally, catalyzes the reaction of cyanate with bicarbonate to produce ammonia and carbon dioxide. This is Cyanate hydratase from Vitis vinifera (Grape).